Reading from the N-terminus, the 654-residue chain is Coiled-coil domain-containing protein 81 (654 aa).

Positions 196–270 (SRESYRKRPN…RERQSISPAK (75 aa)) are disordered. The residue at position 206 (Ser-206) is a Phosphoserine. Composition is skewed to basic and acidic residues over residues 212-222 (RIEHKETENKT) and 232-251 (GENR…EGGA). Residues Ser-273, Ser-275, Ser-296, and Ser-419 each carry the phosphoserine modification. The span at 293–302 (ENLSSPGCQR) shows a compositional bias: polar residues. The tract at residues 293–318 (ENLSSPGCQRNDNERPRTSPAPACQD) is disordered. Residues 431–562 (SQSLLKQMES…QRRDLQMLQR (132 aa)) are a coiled coil.

The protein localises to the cytoplasm. It localises to the cytoskeleton. The protein resides in the microtubule organizing center. It is found in the centrosome. The chain is Coiled-coil domain-containing protein 81 (Ccdc81) from Mus musculus (Mouse).